The following is a 155-amino-acid chain: Aspartate carbamoyltransferase regulatory chain (155 aa).

Residues C113, C118, C139, and C142 each coordinate Zn(2+).

Belongs to the PyrI family. In terms of assembly, contains catalytic and regulatory chains. The cofactor is Zn(2+).

In terms of biological role, involved in allosteric regulation of aspartate carbamoyltransferase. In Methanosphaerula palustris (strain ATCC BAA-1556 / DSM 19958 / E1-9c), this protein is Aspartate carbamoyltransferase regulatory chain.